The chain runs to 400 residues: Large envelope protein (400 aa).

The residue at position 1 (Met-1) is an N-acetylmethionine. Disordered stretches follow at residues 1-64 (MGGW…GAFG), 85-118 (LTTVPAAPPPASTNRQSGRQPTPISPPLRDSHPQ), and 143-174 (PGGSSSGTVNPVPTTASPISSISSRTGDPAPN). Gly-2 carries N-myristoyl glycine; by host lipidation. The pre-S1 stretch occupies residues 2-119 (GGWSSKPRQG…PPLRDSHPQA (118 aa)). Residues 2-174 (GGWSSKPRQG…SSRTGDPAPN (173 aa)) form a pre-S region. The Virion surface; in external conformation portion of the chain corresponds to 2–181 (GGWSSKPRQG…APNMESTTSG (180 aa)). The Intravirion; in internal conformation portion of the chain corresponds to 2–253 (GGWSSKPRQG…PGYRWMCLRR (252 aa)). A glycan (N-linked (GlcNAc...) asparagine) is linked at Trp-4. Over residues 96–106 (STNRQSGRQPT) the composition is skewed to polar residues. Residues 120-174 (MQWNSTTFHQVLLDPRVRGLYFPPGGSSSGTVNPVPTTASPISSISSRTGDPAPN) are pre-S2. Positions 155 to 166 (PTTASPISSISS) are enriched in low complexity. A helical transmembrane segment spans residues 182–202 (FLGPLLVLQAGFFLLTRILTI). At 203–253 (PQSLDSWWTSLNFLGGAPTCPGQNSQSPTSNHSPTSCPPICPGYRWMCLRR) the chain is on the intravirion; in external conformation side. Residues 254–274 (FIIFLFILLLCLIFLLVLLDY) form a helical membrane-spanning segment. Residues 275-348 (QGMLPVCPLL…GASVRFSWLS (74 aa)) lie on the Virion surface side of the membrane. Asn-320 is a glycosylation site (N-linked (GlcNAc...) asparagine; by host). A helical transmembrane segment spans residues 349–369 (LLVPFVQWFVGLSPTVWLSVI). Over 370-375 (WMMWYW) the chain is Intravirion. Residues 376–398 (GPSLYNILSPFLPLLPIFFCLWV) form a helical membrane-spanning segment. Topologically, residues 399–400 (YI) are virion surface.

Belongs to the orthohepadnavirus major surface antigen family. In its internal form (Li-HBsAg), interacts with the capsid protein and with the isoform S. Interacts with host chaperone CANX. As to quaternary structure, associates with host chaperone CANX through its pre-S2 N glycan; this association may be essential for isoform M proper secretion. In terms of assembly, interacts with isoform L. Interacts with the antigens of satellite virus HDV (HDVAgs); this interaction is required for encapsidation of HDV genomic RNA. Post-translationally, isoform M is N-terminally acetylated by host at a ratio of 90%, and N-glycosylated by host at the pre-S2 region. In terms of processing, myristoylated.

Its subcellular location is the virion membrane. In terms of biological role, the large envelope protein exists in two topological conformations, one which is termed 'external' or Le-HBsAg and the other 'internal' or Li-HBsAg. In its external conformation the protein attaches the virus to cell receptors and thereby initiating infection. This interaction determines the species specificity and liver tropism. This attachment induces virion internalization predominantly through caveolin-mediated endocytosis. The large envelope protein also assures fusion between virion membrane and endosomal membrane. In its internal conformation the protein plays a role in virion morphogenesis and mediates the contact with the nucleocapsid like a matrix protein. Functionally, the middle envelope protein plays an important role in the budding of the virion. It is involved in the induction of budding in a nucleocapsid independent way. In this process the majority of envelope proteins bud to form subviral lipoprotein particles of 22 nm of diameter that do not contain a nucleocapsid. This is Large envelope protein from Homo sapiens (Human).